A 237-amino-acid chain; its full sequence is Photosystem I-associated linker protein CpcL (237 aa).

The 181-residue stretch at 11 to 191 (TTQNQRVQSF…DYRDRAGIVR (181 aa)) folds into the PBS-linker domain. The chain crosses the membrane as a helical span at residues 208-228 (GVAILGVLLAISAGMTFLFVL).

The protein belongs to the phycobilisome linker protein family. In terms of assembly, part of a specialized phycobilisome (PBS), a structure that is usually composed of two distinct substructures: a core complex and a number of rods radiating from the core. This protein is part of a core-less PBS rod (called CpcL-PBS). In vegetative cells associated substoichiometrically with photosystem I and phycobiliproteins phycocyanin as well as phycoerythrocyanin in the thylakoid membrane, not found in conventional, hemidiscoidal phycobilisomes.

The protein localises to the cellular thylakoid membrane. Rod linker protein, associated with phycocyanin (PC). Linker polypeptides determine the state of aggregation and the location of the disk-shaped phycobiliprotein units within the phycobilisome (PBS) and modulate their spectroscopic properties in order to mediate a directed and optimal energy transfer. Forms a supercomplex with tetrameric photosystem I (PSI) and PC that allows efficient energy transfer from PC to PSI. This protein seems to be in the middle of the PC hexameric rod and may anchor the PC rods at the periphery of PSI tetramers. May be involved in the cyclic electron transport around PSI that provides ATP needed for N(2) fixation in heterocysts. In Nostoc sp. (strain PCC 7120 / SAG 25.82 / UTEX 2576), this protein is Photosystem I-associated linker protein CpcL.